The primary structure comprises 1335 residues: Probable serine/threonine-protein kinase ndrC (1335 aa).

Disordered stretches follow at residues 1 to 70, 85 to 158, 276 to 447, and 462 to 603; these read MSRK…KKGS, VDTH…LIPS, LPPP…SPLN, and TTTT…NNNK. Over residues 8 to 17 the composition is skewed to polar residues; sequence NRSSSSNSIE. The span at 27-41 shows a compositional bias: low complexity; sequence SNISNSSNINCNNSS. The segment covering 55 to 70 has biased composition (basic residues); it reads RSKHSSPIHSLKKKGS. Residues 89–117 show a composition bias toward low complexity; it reads SSSNSNNNSSSNNNNNNNNHNINSSSESS. The span at 118-132 shows a compositional bias: polar residues; the sequence is TPTTPRSSFTPQVTM. Residues 133-153 show a composition bias toward low complexity; it reads NSNQSSGNNSPQLSSRSSSQS. Residues 276–288 show a composition bias toward pro residues; that stretch reads LPPPSQQQLPPPQ. Low complexity-rich tracts occupy residues 289 to 331, 345 to 368, 382 to 396, 412 to 424, 437 to 447, and 462 to 484; these read SHQQ…TPQS, NQQQ…SPNK, SPSP…SPSS, PTPL…SPSS, PSSFSGGSPLN, and TTTT…TTIS. Residues 485–497 show a composition bias toward polar residues; sequence NPNYTQNLPTTPL. The span at 498–507 shows a compositional bias: low complexity; that stretch reads SNSSSNNNNN. A compositionally biased stretch (polar residues) spans 508-528; the sequence is GSFITLQDTTNNKSIINNNRE. Over residues 540–566 the composition is skewed to low complexity; the sequence is SSGSSNTTSSTTNTTTPSSSSLTTSSG. A compositionally biased stretch (basic and acidic residues) spans 567 to 581; the sequence is KESRDRDSKDKEKDL. The span at 586-602 shows a compositional bias: low complexity; it reads NNNNNNNNNNNNNNNNN. Positions 586 to 613 form a coiled coil; the sequence is NNNNNNNNNNNNNNNNNKVEKEKENYCK. A Protein kinase domain is found at 718 to 1019; sequence FKILTQIGKG…KQDFKNHPFF (302 aa). ATP-binding positions include 724–732 and Lys747; that span reads IGKGGFGQV. The active-site Proton acceptor is the Asp840. The 87-residue stretch at 1020-1106 folds into the AGC-kinase C-terminal domain; the sequence is KNHNWDEIVN…RKSSALSLSM (87 aa). Over residues 1239-1284 the composition is skewed to low complexity; it reads SQSQPSLANQLQSSSSSPSPSLQSQSQSPSLQSSSKSTPNLSSSLL. The segment at 1239 to 1313 is disordered; it reads SQSQPSLANQ…IKKENESEEI (75 aa). Residues 1287 to 1313 are compositionally biased toward basic and acidic residues; the sequence is PVKEELEYKNQTENEVEIKKENESEEI. Residues 1289-1325 adopt a coiled-coil conformation; that stretch reads KEELEYKNQTENEVEIKKENESEEIQSLRDQLKEIII.

Belongs to the protein kinase superfamily. AGC Ser/Thr protein kinase family.

The enzyme catalyses L-seryl-[protein] + ATP = O-phospho-L-seryl-[protein] + ADP + H(+). It carries out the reaction L-threonyl-[protein] + ATP = O-phospho-L-threonyl-[protein] + ADP + H(+). This Dictyostelium discoideum (Social amoeba) protein is Probable serine/threonine-protein kinase ndrC (ndrC).